A 75-amino-acid chain; its full sequence is Protein CYSTEINE-RICH TRANSMEMBRANE MODULE 5 (75 aa).

Residues 1–29 (MSQYSQNQYAGAYPTPPVSTGPYVAPPPL) are disordered. Over residues 14–29 (PTPPVSTGPYVAPPPL) the composition is skewed to pro residues. A helical transmembrane segment spans residues 52 to 69 (AADGFLKGCLATMLACCV).

The protein belongs to the CYSTM1 family. In terms of assembly, heterodimers. Interacts with CYSTM7 and WIH1/CYSTM13. In terms of tissue distribution, mostly expressed in roots, stems, rosette leaves and siliques and, to a lower extent, in flowers and cauline leaves.

It is found in the cell membrane. The protein localises to the nucleus. Functionally, involved in resistance to abiotic stress. The protein is Protein CYSTEINE-RICH TRANSMEMBRANE MODULE 5 of Arabidopsis thaliana (Mouse-ear cress).